A 452-amino-acid chain; its full sequence is Ribosomal protein uS12 methylthiotransferase RimO (452 aa).

The 112-residue stretch at 5-116 (PTIAFSHLGC…IVDVLQRTES (112 aa)) folds into the MTTase N-terminal domain. 6 residues coordinate [4Fe-4S] cluster: cysteine 14, cysteine 50, cysteine 79, cysteine 154, cysteine 158, and cysteine 161. The Radical SAM core domain occupies 140–369 (TTTSAVAYLR…MATQQPIAER (230 aa)). Residues 372 to 438 (RAQIGRLVDV…IYDLHGEVAS (67 aa)) enclose the TRAM domain.

This sequence belongs to the methylthiotransferase family. RimO subfamily. [4Fe-4S] cluster is required as a cofactor.

The protein resides in the cytoplasm. It carries out the reaction L-aspartate(89)-[ribosomal protein uS12]-hydrogen + (sulfur carrier)-SH + AH2 + 2 S-adenosyl-L-methionine = 3-methylsulfanyl-L-aspartate(89)-[ribosomal protein uS12]-hydrogen + (sulfur carrier)-H + 5'-deoxyadenosine + L-methionine + A + S-adenosyl-L-homocysteine + 2 H(+). Catalyzes the methylthiolation of an aspartic acid residue of ribosomal protein uS12. In Synechococcus sp. (strain ATCC 27144 / PCC 6301 / SAUG 1402/1) (Anacystis nidulans), this protein is Ribosomal protein uS12 methylthiotransferase RimO.